The chain runs to 348 residues: Photosystem II protein D1 (348 aa).

The next 3 helical transmembrane spans lie at 33–50 (YIGW…LATV), 122–137 (HFIF…EWEF), and 146–160 (WIFV…ASCA). Histidine 122 is a chlorophyll a binding site. Tryptophan 130 lines the pheophytin a pocket. Positions 174 and 193 each coordinate [CaMn4O5] cluster. Residues 201-222 (FHILGVAGVFGGSLFSAMHGSL) traverse the membrane as a helical segment. Histidine 202 serves as a coordination point for chlorophyll a. A quinone contacts are provided by residues histidine 219 and 268–269 (SF). A Fe cation-binding site is contributed by histidine 219. Histidine 276 is a Fe cation binding site. A helical transmembrane segment spans residues 278-292 (FLAAWPVIGIWFTAL). Residues histidine 336, glutamate 337, aspartate 346, and alanine 348 each contribute to the [CaMn4O5] cluster site.

It belongs to the reaction center PufL/M/PsbA/D family. As to quaternary structure, PSII is composed of 1 copy each of membrane proteins PsbA, PsbB, PsbC, PsbD, PsbE, PsbF, PsbH, PsbI, PsbJ, PsbK, PsbL, PsbM, PsbT, PsbX, PsbY, PsbZ, Psb30/Ycf12, at least 3 peripheral proteins of the oxygen-evolving complex and a large number of cofactors. It forms dimeric complexes. Requires The D1/D2 heterodimer binds P680, chlorophylls that are the primary electron donor of PSII, and subsequent electron acceptors. It shares a non-heme iron and each subunit binds pheophytin, quinone, additional chlorophylls, carotenoids and lipids. D1 provides most of the ligands for the Mn4-Ca-O5 cluster of the oxygen-evolving complex (OEC). There is also a Cl(-1) ion associated with D1 and D2, which is required for oxygen evolution. The PSII complex binds additional chlorophylls, carotenoids and specific lipids. as cofactor. In terms of processing, tyr-165 forms a radical intermediate that is referred to as redox-active TyrZ, YZ or Y-Z.

The protein resides in the plastid. The protein localises to the chloroplast thylakoid membrane. It catalyses the reaction 2 a plastoquinone + 4 hnu + 2 H2O = 2 a plastoquinol + O2. Photosystem II (PSII) is a light-driven water:plastoquinone oxidoreductase that uses light energy to abstract electrons from H(2)O, generating O(2) and a proton gradient subsequently used for ATP formation. It consists of a core antenna complex that captures photons, and an electron transfer chain that converts photonic excitation into a charge separation. The D1/D2 (PsbA/PsbD) reaction center heterodimer binds P680, the primary electron donor of PSII as well as several subsequent electron acceptors. The chain is Photosystem II protein D1 from Heterocapsa rotundata (Dinoflagellate).